The primary structure comprises 387 residues: 8-amino-7-oxononanoate synthase (387 aa).

Position 19 (arginine 19) interacts with substrate. 106-107 lines the pyridoxal 5'-phosphate pocket; sequence GY. Substrate is bound at residue histidine 131. Residues serine 177, histidine 205, and threonine 234 each contribute to the pyridoxal 5'-phosphate site. At lysine 237 the chain carries N6-(pyridoxal phosphate)lysine. Substrate is bound at residue threonine 351.

The protein belongs to the class-II pyridoxal-phosphate-dependent aminotransferase family. BioF subfamily. In terms of assembly, homodimer. It depends on pyridoxal 5'-phosphate as a cofactor.

The enzyme catalyses 6-carboxyhexanoyl-[ACP] + L-alanine + H(+) = (8S)-8-amino-7-oxononanoate + holo-[ACP] + CO2. It functions in the pathway cofactor biosynthesis; biotin biosynthesis. In terms of biological role, catalyzes the decarboxylative condensation of pimeloyl-[acyl-carrier protein] and L-alanine to produce 8-amino-7-oxononanoate (AON), [acyl-carrier protein], and carbon dioxide. The protein is 8-amino-7-oxononanoate synthase of Methylococcus capsulatus (strain ATCC 33009 / NCIMB 11132 / Bath).